We begin with the raw amino-acid sequence, 431 residues long: MADAESQNGENHLPHKIYLDYNATTPPATEVVKAVEEALREAWGNPSSSYTAGCKAKELIDTARAHVAKMVGGKPEDIIFTSGGTEANNMVLFSTVENFNSTSKERQNNRVALALPHIITSNVEHDSVALPLLHLQKTHRAEITFVPVSTVTGRIEVEDIISAVRPNTCLVSIMLANNETGVIMPVGELSQCLASMSKERSAQGLPKILLHTDAAQALGKVEVDVQELGVNYLTIVGHKFYGPRIGALYVRGLGQHSSLLPMLYGGGQERNFRPGTENTPMIAGLGKAAELVFLHCAVYEAHMRRIRDYLEERLEAVFEDRIRLNSRFPGAERLPNTCNVSLLKPAMLGHEWLSHCQYLQASIGAACHSDRGDRPSPVLLNSGVPQEAATSAVRLSVGRETSQDDVDLIVRDLEQAAQLLGVNKKSLKKLP.

Lys-239 bears the N6-(pyridoxal phosphate)lysine mark. Cys-367 (S-selanylcysteine intermediate) is an active-site residue.

Belongs to the class-V pyridoxal-phosphate-dependent aminotransferase family. In terms of assembly, homodimer. Pyridoxal 5'-phosphate serves as cofactor.

The protein localises to the cytoplasm. Its subcellular location is the cytosol. It carries out the reaction L-selenocysteine + AH2 = hydrogenselenide + L-alanine + A + H(+). In terms of biological role, catalyzes the decomposition of L-selenocysteine to L-alanine and elemental selenium. The sequence is that of Selenocysteine lyase (scly) from Xenopus tropicalis (Western clawed frog).